A 370-amino-acid chain; its full sequence is Aminomethyltransferase (370 aa).

Belongs to the GcvT family. The glycine cleavage system is composed of four proteins: P, T, L and H.

It catalyses the reaction N(6)-[(R)-S(8)-aminomethyldihydrolipoyl]-L-lysyl-[protein] + (6S)-5,6,7,8-tetrahydrofolate = N(6)-[(R)-dihydrolipoyl]-L-lysyl-[protein] + (6R)-5,10-methylene-5,6,7,8-tetrahydrofolate + NH4(+). Its function is as follows. The glycine cleavage system catalyzes the degradation of glycine. In Prochlorococcus marinus (strain MIT 9215), this protein is Aminomethyltransferase.